A 741-amino-acid chain; its full sequence is NAD(P)H-quinone oxidoreductase subunit 5, chloroplastic (741 aa).

The next 16 membrane-spanning stretches (helical) occupy residues 9–29 (WIIP…LLLF), 40–60 (WAFQ…NLSI), 89–109 (IDPL…MVLI), 125–145 (FAYM…SNLI), 147–167 (IYIF…FWFT), 185–205 (GDFG…SFEF), 219–239 (NEVN…GAIA), 258–278 (TPIS…FLVA), 284–304 (FIVI…TVFF), 327–347 (LGYM…FHLI), 354–374 (ALLF…VGYC), 396–416 (NSFL…CFWS), 425–445 (WLYS…TAFY), 549–569 (LFPI…GIPF), 605–625 (VFSV…YKPV), and 721–741 (YLFF…FLNF).

It belongs to the complex I subunit 5 family. In terms of assembly, NDH is composed of at least 16 different subunits, 5 of which are encoded in the nucleus.

The protein localises to the plastid. It is found in the chloroplast thylakoid membrane. The catalysed reaction is a plastoquinone + NADH + (n+1) H(+)(in) = a plastoquinol + NAD(+) + n H(+)(out). It carries out the reaction a plastoquinone + NADPH + (n+1) H(+)(in) = a plastoquinol + NADP(+) + n H(+)(out). Its function is as follows. NDH shuttles electrons from NAD(P)H:plastoquinone, via FMN and iron-sulfur (Fe-S) centers, to quinones in the photosynthetic chain and possibly in a chloroplast respiratory chain. The immediate electron acceptor for the enzyme in this species is believed to be plastoquinone. Couples the redox reaction to proton translocation, and thus conserves the redox energy in a proton gradient. This chain is NAD(P)H-quinone oxidoreductase subunit 5, chloroplastic (ndhF), found in Flaveria ramosissima (Yellowtops).